The primary structure comprises 350 residues: Magnesium-chelatase 38 kDa subunit (350 aa).

52–59 provides a ligand contact to ATP; sequence GDRGTGKS.

Belongs to the Mg-chelatase subunits D/I family.

It carries out the reaction protoporphyrin IX + Mg(2+) + ATP + H2O = Mg-protoporphyrin IX + ADP + phosphate + 3 H(+). It participates in porphyrin-containing compound metabolism; bacteriochlorophyll biosynthesis. In terms of biological role, involved in bacteriochlorophyll biosynthesis; introduces a magnesium ion into protoporphyrin IX to yield Mg-protoporphyrin IX. This chain is Magnesium-chelatase 38 kDa subunit (bchI), found in Rhodobacter capsulatus (strain ATCC BAA-309 / NBRC 16581 / SB1003).